A 201-amino-acid polypeptide reads, in one-letter code: Small ribosomal subunit protein uS4c (201 aa).

The segment at 20–44 (GLTSKRPTVGSELRNQSRSTKKSQY) is disordered. The S4 RNA-binding domain maps to 89–150 (MRLDNILFRL…NKKSKTLIQN (62 aa)).

The protein belongs to the universal ribosomal protein uS4 family. Part of the 30S ribosomal subunit. Contacts protein S5. The interaction surface between S4 and S5 is involved in control of translational fidelity.

The protein localises to the plastid. Its subcellular location is the chloroplast. Functionally, one of the primary rRNA binding proteins, it binds directly to 16S rRNA where it nucleates assembly of the body of the 30S subunit. Its function is as follows. With S5 and S12 plays an important role in translational accuracy. The chain is Small ribosomal subunit protein uS4c (rps4) from Lotus japonicus (Lotus corniculatus var. japonicus).